The primary structure comprises 315 residues: tRNA uridine(34) hydroxylase (315 aa).

The Rhodanese domain maps to 136–230; it reads SDPETLVIDT…YLEEIPPEES (95 aa). The active-site Cysteine persulfide intermediate is the cysteine 190.

Belongs to the TrhO family.

The enzyme catalyses uridine(34) in tRNA + AH2 + O2 = 5-hydroxyuridine(34) in tRNA + A + H2O. In terms of biological role, catalyzes oxygen-dependent 5-hydroxyuridine (ho5U) modification at position 34 in tRNAs. The sequence is that of tRNA uridine(34) hydroxylase from Sinorhizobium medicae (strain WSM419) (Ensifer medicae).